Here is a 171-residue protein sequence, read N- to C-terminus: 3-hydroxydecanoyl-[acyl-carrier-protein] dehydratase (171 aa).

The active site involves His-70.

The protein belongs to the thioester dehydratase family. FabA subfamily. As to quaternary structure, homodimer.

It localises to the cytoplasm. It catalyses the reaction a (3R)-hydroxyacyl-[ACP] = a (2E)-enoyl-[ACP] + H2O. The enzyme catalyses (3R)-hydroxydecanoyl-[ACP] = (2E)-decenoyl-[ACP] + H2O. It carries out the reaction (2E)-decenoyl-[ACP] = (3Z)-decenoyl-[ACP]. Its pathway is lipid metabolism; fatty acid biosynthesis. In terms of biological role, necessary for the introduction of cis unsaturation into fatty acids. Catalyzes the dehydration of (3R)-3-hydroxydecanoyl-ACP to E-(2)-decenoyl-ACP and then its isomerization to Z-(3)-decenoyl-ACP. Can catalyze the dehydratase reaction for beta-hydroxyacyl-ACPs with saturated chain lengths up to 16:0, being most active on intermediate chain length. The chain is 3-hydroxydecanoyl-[acyl-carrier-protein] dehydratase from Shewanella halifaxensis (strain HAW-EB4).